A 402-amino-acid chain; its full sequence is Rubredoxin-oxygen oxidoreductase (402 aa).

Positions 30–216 (PMGTTYNAYL…KAIETLVGAG (187 aa)) are zinc metallo-hydrolase. The Fe cation site is built by H79, E81, D83, H146, D165, and H226. The Flavodoxin-like domain maps to 255–393 (VVIFYDSMWH…QLKTMAQTIA (139 aa)).

The protein in the N-terminal section; belongs to the zinc metallo-hydrolase group 3 family. Homodimer. Requires FMN as cofactor. The cofactor is Fe cation.

It participates in energy metabolism; electron transfer. Functionally, catalyzes the four-electron reduction of one oxygen molecule to two water molecules. The polypeptide is Rubredoxin-oxygen oxidoreductase (roo) (Megalodesulfovibrio gigas (strain ATCC 19364 / DSM 1382 / NCIMB 9332 / VKM B-1759) (Desulfovibrio gigas)).